The sequence spans 634 residues: (-)-limonene synthase, chloroplastic (634 aa).

The N-terminal 21 residues, 1–21 (MSPVSAIPLAYKLCLPRSLIS), are a transit peptide targeting the chloroplast. (2E)-geranyl diphosphate contacts are provided by arginine 348, aspartate 385, aspartate 389, arginine 526, and glycine 529. The Mg(2+) site is built by aspartate 385 and aspartate 389. The DDXXD motif motif lies at 385–389 (DDIYD). Glycine 529 and aspartate 537 together coordinate Mg(2+).

This sequence belongs to the terpene synthase family. Tpsb subfamily. Monomer. Requires Mg(2+) as cofactor. The cofactor is Mn(2+).

Its subcellular location is the plastid. The protein resides in the chloroplast. The enzyme catalyses (2E)-geranyl diphosphate = (4S)-limonene + diphosphate. The protein operates within secondary metabolite biosynthesis; terpenoid biosynthesis. It participates in terpene metabolism; oleoresin biosynthesis. Functionally, monoterpene synthase (mono-TPS) involved in the biosynthesis of monoterpene natural products. Catalyzes the conversion of (2E)-geranyl diphosphate (GPP) into (-)-limonene. Not able to use geranylgeranyl pyrophosphate (GGPP) and farnesyl pyrophosphate (FPP) as substrates. This Picea sitchensis (Sitka spruce) protein is (-)-limonene synthase, chloroplastic.